Reading from the N-terminus, the 96-residue chain is Co-chaperonin GroES (96 aa).

This sequence belongs to the GroES chaperonin family. As to quaternary structure, heptamer of 7 subunits arranged in a ring. Interacts with the chaperonin GroEL.

Its subcellular location is the cytoplasm. In terms of biological role, together with the chaperonin GroEL, plays an essential role in assisting protein folding. The GroEL-GroES system forms a nano-cage that allows encapsulation of the non-native substrate proteins and provides a physical environment optimized to promote and accelerate protein folding. GroES binds to the apical surface of the GroEL ring, thereby capping the opening of the GroEL channel. The sequence is that of Co-chaperonin GroES from Dechloromonas aromatica (strain RCB).